A 226-amino-acid chain; its full sequence is Lipoprotein-releasing system ATP-binding protein LolD 1 (226 aa).

The ABC transporter domain occupies 5–225 (LKLDGIRKSY…IVRVVDGKIA (221 aa)). Position 42 to 49 (42 to 49 (GPSGSGKS)) interacts with ATP.

The protein belongs to the ABC transporter superfamily. Lipoprotein translocase (TC 3.A.1.125) family. The complex is composed of two ATP-binding proteins (LolD) and two transmembrane proteins (LolC and LolE).

Its subcellular location is the cell inner membrane. Part of the ABC transporter complex LolCDE involved in the translocation of mature outer membrane-directed lipoproteins, from the inner membrane to the periplasmic chaperone, LolA. Responsible for the formation of the LolA-lipoprotein complex in an ATP-dependent manner. The chain is Lipoprotein-releasing system ATP-binding protein LolD 1 from Rhodopseudomonas palustris (strain ATCC BAA-98 / CGA009).